The following is a 128-amino-acid chain: Glycine cleavage system H protein (128 aa).

A Lipoyl-binding domain is found at 25-107 (TFKVGITDHA…YEAGWLFTVR (83 aa)). An N6-lipoyllysine modification is found at Lys-66.

Belongs to the GcvH family. As to quaternary structure, the glycine cleavage system is composed of four proteins: P, T, L and H. Requires (R)-lipoate as cofactor.

In terms of biological role, the glycine cleavage system catalyzes the degradation of glycine. The H protein shuttles the methylamine group of glycine from the P protein to the T protein. This chain is Glycine cleavage system H protein, found in Kocuria rhizophila (strain ATCC 9341 / DSM 348 / NBRC 103217 / DC2201).